The chain runs to 240 residues: Uridylate kinase (240 aa).

12–15 provides a ligand contact to ATP; sequence KLSG. Glycine 54 contacts UMP. ATP-binding residues include glycine 55 and arginine 59. Residues aspartate 74 and 135 to 142 each bind UMP; that span reads TGNPFFTT. Positions 162, 168, and 171 each coordinate ATP.

The protein belongs to the UMP kinase family. Homohexamer.

Its subcellular location is the cytoplasm. The enzyme catalyses UMP + ATP = UDP + ADP. Its pathway is pyrimidine metabolism; CTP biosynthesis via de novo pathway; UDP from UMP (UMPK route): step 1/1. With respect to regulation, inhibited by UTP. In terms of biological role, catalyzes the reversible phosphorylation of UMP to UDP. The polypeptide is Uridylate kinase (Xanthomonas oryzae pv. oryzae (strain KACC10331 / KXO85)).